The following is a 275-amino-acid chain: Formamidopyrimidine-DNA glycosylase (275 aa).

Proline 2 serves as the catalytic Schiff-base intermediate with DNA. Glutamate 3 serves as the catalytic Proton donor. Lysine 58 (proton donor; for beta-elimination activity) is an active-site residue. DNA contacts are provided by histidine 91 and arginine 110. The FPG-type zinc finger occupies 238 to 272 (QVYGQTGKSCPRCGQAIVKLKVGGRGTHICPKCQK). Arginine 262 serves as the catalytic Proton donor; for delta-elimination activity.

The protein belongs to the FPG family. Monomer. It depends on Zn(2+) as a cofactor.

The enzyme catalyses Hydrolysis of DNA containing ring-opened 7-methylguanine residues, releasing 2,6-diamino-4-hydroxy-5-(N-methyl)formamidopyrimidine.. It carries out the reaction 2'-deoxyribonucleotide-(2'-deoxyribose 5'-phosphate)-2'-deoxyribonucleotide-DNA = a 3'-end 2'-deoxyribonucleotide-(2,3-dehydro-2,3-deoxyribose 5'-phosphate)-DNA + a 5'-end 5'-phospho-2'-deoxyribonucleoside-DNA + H(+). Involved in base excision repair of DNA damaged by oxidation or by mutagenic agents. Acts as a DNA glycosylase that recognizes and removes damaged bases. Has a preference for oxidized purines, such as 7,8-dihydro-8-oxoguanine (8-oxoG). Has AP (apurinic/apyrimidinic) lyase activity and introduces nicks in the DNA strand. Cleaves the DNA backbone by beta-delta elimination to generate a single-strand break at the site of the removed base with both 3'- and 5'-phosphates. The polypeptide is Formamidopyrimidine-DNA glycosylase (Streptococcus pyogenes serotype M3 (strain ATCC BAA-595 / MGAS315)).